Here is a 342-residue protein sequence, read N- to C-terminus: Ferredoxin--NADP reductase (342 aa).

Positions 17, 36, 44, 49, 89, 124, 289, and 330 each coordinate FAD.

The protein belongs to the ferredoxin--NADP reductase type 2 family. In terms of assembly, homodimer. FAD is required as a cofactor.

It catalyses the reaction 2 reduced [2Fe-2S]-[ferredoxin] + NADP(+) + H(+) = 2 oxidized [2Fe-2S]-[ferredoxin] + NADPH. The sequence is that of Ferredoxin--NADP reductase from Rhodopseudomonas palustris (strain ATCC BAA-98 / CGA009).